The following is a 631-amino-acid chain: Pescadillo homolog (631 aa).

Residues 321 to 414 (RLRTLFKGLK…QLLPTNDYFL (94 aa)) enclose the BRCT domain. Positions 428–442 (SKRDSYIPPEEKALH) are enriched in basic and acidic residues. Disordered regions lie at residues 428–471 (SKRD…EADQ), 489–561 (YKKY…VDEH), and 602–631 (ADNK…KLVK). Phosphoserine occurs at positions 453 and 457. 2 stretches are compositionally biased toward acidic residues: residues 453-471 (SEEE…EADQ) and 498-525 (VNED…EDVD). Positions 526–538 (EQTKRKQQEKEKM) are enriched in basic and acidic residues. The segment covering 544 to 553 (KVHKVNKRQV) has biased composition (basic residues). A coiled-coil region spans residues 591–631 (WLLRKKRRNIDADNKEAKKAAKREARKQAAEAAARAAKLVK). A compositionally biased stretch (basic and acidic residues) spans 602-619 (ADNKEAKKAAKREARKQA). Residues 620–631 (AEAAARAAKLVK) are compositionally biased toward low complexity.

It belongs to the pescadillo family.

Its subcellular location is the nucleus. It localises to the nucleolus. The protein localises to the nucleoplasm. In terms of biological role, required for maturation of ribosomal RNAs and formation of the large ribosomal subunit. This Drosophila pseudoobscura pseudoobscura (Fruit fly) protein is Pescadillo homolog.